We begin with the raw amino-acid sequence, 498 residues long: Heat stress transcription factor A-3 (498 aa).

The interval 156 to 180 (RRRSSPTQQSGLQPGSSGESGLDPE) is disordered. Positions 160 to 174 (SPTQQSGLQPGSSGE) are enriched in polar residues. A coiled-coil region spans residues 180-235 (ELNTLRREKSALLQEVTRLKQEHLQTIEQMSTLNQRLESAEDRQKQMVSFLAKLLQ). Positions 184–234 (LRREKSALLQEVTRLKQEHLQTIEQMSTLNQRLESAEDRQKQMVSFLAKLL) are hydrophobic repeat HR-A/B. The short motif at 258-263 (KRKFLK) is the Nuclear localization signal element. The interval 263-291 (KHVPHGNIDSGESSSQHTGESNLDFSPTS) is disordered. Positions 272–291 (SGESSSQHTGESNLDFSPTS) are enriched in polar residues. Residues 309–316 (LEDGDLNL) carry the Nuclear export signal motif. The interval 356–382 (LEIPPASGPRGQDPTIGRSKGKNVLSP) is disordered.

It belongs to the HSF family. Class A subfamily. In terms of assembly, homotrimer. In terms of processing, exhibits temperature-dependent phosphorylation.

Its subcellular location is the cytoplasm. It localises to the nucleus. In terms of biological role, transcriptional regulator that specifically binds DNA of heat shock promoter elements (HSE). This Oryza sativa subsp. japonica (Rice) protein is Heat stress transcription factor A-3 (HSFA3).